The following is an 874-amino-acid chain: Alanine--tRNA ligase (874 aa).

4 residues coordinate Zn(2+): His562, His566, Cys664, and His668.

The protein belongs to the class-II aminoacyl-tRNA synthetase family. It depends on Zn(2+) as a cofactor.

It localises to the cytoplasm. The enzyme catalyses tRNA(Ala) + L-alanine + ATP = L-alanyl-tRNA(Ala) + AMP + diphosphate. Functionally, catalyzes the attachment of alanine to tRNA(Ala) in a two-step reaction: alanine is first activated by ATP to form Ala-AMP and then transferred to the acceptor end of tRNA(Ala). Also edits incorrectly charged Ser-tRNA(Ala) and Gly-tRNA(Ala) via its editing domain. This chain is Alanine--tRNA ligase, found in Shewanella woodyi (strain ATCC 51908 / MS32).